The sequence spans 269 residues: Putative phosphoenolpyruvate synthase regulatory protein (269 aa).

Residue 149-156 coordinates ADP; that stretch reads GVSRSGKT.

Belongs to the pyruvate, phosphate/water dikinase regulatory protein family. PSRP subfamily.

It catalyses the reaction [pyruvate, water dikinase] + ADP = [pyruvate, water dikinase]-phosphate + AMP + H(+). The enzyme catalyses [pyruvate, water dikinase]-phosphate + phosphate + H(+) = [pyruvate, water dikinase] + diphosphate. Its function is as follows. Bifunctional serine/threonine kinase and phosphorylase involved in the regulation of the phosphoenolpyruvate synthase (PEPS) by catalyzing its phosphorylation/dephosphorylation. This chain is Putative phosphoenolpyruvate synthase regulatory protein, found in Colwellia psychrerythraea (strain 34H / ATCC BAA-681) (Vibrio psychroerythus).